Reading from the N-terminus, the 284-residue chain is UPF0354 protein SERP1303 (284 aa).

Belongs to the UPF0354 family.

The chain is UPF0354 protein SERP1303 from Staphylococcus epidermidis (strain ATCC 35984 / DSM 28319 / BCRC 17069 / CCUG 31568 / BM 3577 / RP62A).